A 593-amino-acid polypeptide reads, in one-letter code: Arginine--tRNA ligase (593 aa).

Positions 123 to 133 (PNVAKPMHVGH) match the 'HIGH' region motif.

Belongs to the class-I aminoacyl-tRNA synthetase family. In terms of assembly, monomer.

Its subcellular location is the cytoplasm. The catalysed reaction is tRNA(Arg) + L-arginine + ATP = L-arginyl-tRNA(Arg) + AMP + diphosphate. The sequence is that of Arginine--tRNA ligase from Phenylobacterium zucineum (strain HLK1).